The following is a 504-amino-acid chain: ATP synthase subunit alpha 2 (504 aa).

Residue 169 to 176 (GDRQTGKT) coordinates ATP.

The protein belongs to the ATPase alpha/beta chains family. As to quaternary structure, F-type ATPases have 2 components, CF(1) - the catalytic core - and CF(0) - the membrane proton channel. CF(1) has five subunits: alpha(3), beta(3), gamma(1), delta(1), epsilon(1). CF(0) has three main subunits: a(1), b(2) and c(9-12). The alpha and beta chains form an alternating ring which encloses part of the gamma chain. CF(1) is attached to CF(0) by a central stalk formed by the gamma and epsilon chains, while a peripheral stalk is formed by the delta and b chains.

The protein localises to the cell membrane. The enzyme catalyses ATP + H2O + 4 H(+)(in) = ADP + phosphate + 5 H(+)(out). In terms of biological role, produces ATP from ADP in the presence of a proton gradient across the membrane. The alpha chain is a regulatory subunit. This chain is ATP synthase subunit alpha 2, found in Listeria welshimeri serovar 6b (strain ATCC 35897 / DSM 20650 / CCUG 15529 / CIP 8149 / NCTC 11857 / SLCC 5334 / V8).